The primary structure comprises 427 residues: Serine protease HTRA2, mitochondrial (427 aa).

Residues 33-57 form a disordered region; the sequence is HTASSSKGSGGDNSKDQENNGQNKS. A helical transmembrane segment spans residues 67–87; sequence VFQFCVPFSLGALVSAVLIEG. Positions 78 to 81 match the IAP-binding motif; that stretch reads ALVS. Residues 144-307 are serine protease; that stretch reads SNGSGFVIEQ…IPIDYVKVFL (164 aa). Catalysis depends on charge relay system residues histidine 162, aspartate 194, and serine 271. The PDZ domain maps to 330–415; it reads MGITMLTLTP…DLEIVILRGV (86 aa).

The protein belongs to the peptidase S1C family. Interacts with th/DIAP1 (via BIR 2 domain).

It is found in the mitochondrion intermembrane space. It localises to the mitochondrion membrane. It carries out the reaction Cleavage of non-polar aliphatic amino-acids at the P1 position, with a preference for Val, Ile and Met. At the P2 and P3 positions, Arg is selected most strongly with a secondary preference for other hydrophilic residues.. Functionally, serine protease that shows proteolytic activity against a non-specific substrate beta-casein. Promotes or induces cell death either by direct binding to and inhibition of BIRC proteins (also called inhibitor of apoptosis proteins, IAPs), leading to an increase in caspase activity, or by a BIRC inhibition-independent, caspase-independent and serine protease activity-dependent mechanism. Can antagonize antiapoptotic activity of th/Diap1 by directly inducing the degradation of th/Diap1. This chain is Serine protease HTRA2, mitochondrial, found in Drosophila persimilis (Fruit fly).